The sequence spans 125 residues: Glycine cleavage system H protein (125 aa).

Residues 22 to 104 (SYIIGITDFA…YDTGWILKLT (83 aa)) form the Lipoyl-binding domain. Lysine 63 carries the post-translational modification N6-lipoyllysine.

Belongs to the GcvH family. The glycine cleavage system is composed of four proteins: P, T, L and H. (R)-lipoate serves as cofactor.

The glycine cleavage system catalyzes the degradation of glycine. The H protein shuttles the methylamine group of glycine from the P protein to the T protein. In terms of biological role, is also involved in protein lipoylation via its role as an octanoyl/lipoyl carrier protein intermediate. This is Glycine cleavage system H protein from Listeria innocua serovar 6a (strain ATCC BAA-680 / CLIP 11262).